A 270-amino-acid chain; its full sequence is DNA-directed RNA polymerase subunit Rpo3 (270 aa).

The [3Fe-4S] cluster site is built by Cys206, Cys209, and Cys212.

Belongs to the archaeal Rpo3/eukaryotic RPB3 RNA polymerase subunit family. As to quaternary structure, part of the RNA polymerase complex. It depends on [3Fe-4S] cluster as a cofactor.

Its subcellular location is the cytoplasm. The catalysed reaction is RNA(n) + a ribonucleoside 5'-triphosphate = RNA(n+1) + diphosphate. DNA-dependent RNA polymerase (RNAP) catalyzes the transcription of DNA into RNA using the four ribonucleoside triphosphates as substrates. This is DNA-directed RNA polymerase subunit Rpo3 from Methanosphaera stadtmanae (strain ATCC 43021 / DSM 3091 / JCM 11832 / MCB-3).